A 453-amino-acid chain; its full sequence is Putative folate transporter 2 (453 aa).

The next 11 helical transmembrane spans lie at 41 to 64 (IVVYLVGLSDGLIHLASLAIYYLF), 76 to 96 (SLILMYPYLPFILKPIIALIT), 108 to 126 (PYLFLFSLFQSLNFLSLAL), 132 to 156 (IQATLVLFFISLCASFCTTVAEALV), 176 to 195 (IASKAVGSLSVAYFSGYFLE), 201 to 220 (YIFMATSIFPLIISISCLFL), 241 to 260 (FINTPVFIGPFLYIFVYMSG), 280 to 300 (SFMGTLRLTYGIASLIGIIVY), 312 to 330 (TLIFTTLVSFPIYISPIIL), 346 to 366 (VLSGGFLIEAITEIQLLPLFI), and 416 to 437 (LSMYILTCGLFLLLSLSLVPLL).

This sequence belongs to the major facilitator superfamily. Folate-biopterin transporter (TC 2.A.71) family.

Its subcellular location is the plastid. It localises to the apicoplast. The protein resides in the membrane. In terms of biological role, putative folate transporter. Required for sporogony of malaria parasites and host switching. The protein is Putative folate transporter 2 of Plasmodium berghei (strain Anka).